The chain runs to 309 residues: Olfactory receptor 7A17 (309 aa).

Over 1–25 (MEPENDTGISEFVLLGLSEEPELQP) the chain is Extracellular. The N-linked (GlcNAc...) asparagine glycan is linked to N5. Residues 26 to 46 (FLFGLFLSMYLVTVLGNLLII) traverse the membrane as a helical segment. The Cytoplasmic portion of the chain corresponds to 47 to 54 (LATISDSH). The chain crosses the membrane as a helical span at residues 55-75 (LHTPMYFFLSNLSFADICFIS). At 76-99 (TTIPKMLINIQTQSRVITYAGCIT) the chain is on the extracellular side. The cysteines at positions 97 and 189 are disulfide-linked. Residues 100–120 (QMCFFVLFGGLDSLLLAVMAY) traverse the membrane as a helical segment. The Cytoplasmic segment spans residues 121–139 (DRFVAICHPLHYTVIMNPR). A helical membrane pass occupies residues 140-160 (LCGLLVLASWMIAALNSLSQS). The Extracellular portion of the chain corresponds to 161–197 (LMVLWLSFCTDLEIPHFFCELNQVIHLACSDTFLNDM). A helical membrane pass occupies residues 198-217 (GMYFAAGLLAGGPLVGILCS). Residues 218-237 (YSKIVSSIRAISSAQGKYKA) lie on the Cytoplasmic side of the membrane. The chain crosses the membrane as a helical span at residues 238–258 (FSTCASHLSVVSLFCCTGLGV). Over 259-271 (YLTSAATHNSHTS) the chain is Extracellular. Residues 272-292 (ATASVMYTVATPMLNPFIYSL) traverse the membrane as a helical segment. The Cytoplasmic segment spans residues 293 to 309 (RNKDIKRALKMSFRGKQ).

This sequence belongs to the G-protein coupled receptor 1 family.

It localises to the cell membrane. Odorant receptor. In Homo sapiens (Human), this protein is Olfactory receptor 7A17 (OR7A17).